The sequence spans 272 residues: Small ribosomal subunit protein uS2 (272 aa).

The interval 251 to 272 is disordered; that stretch reads LLTEGAPAAEAPAEAEGETKAE. Residues 253 to 264 show a composition bias toward low complexity; it reads TEGAPAAEAPAE.

This sequence belongs to the universal ribosomal protein uS2 family.

The protein is Small ribosomal subunit protein uS2 of Bifidobacterium adolescentis (strain ATCC 15703 / DSM 20083 / NCTC 11814 / E194a).